Reading from the N-terminus, the 409-residue chain is 3-isopropylmalate dehydrogenase 1, chloroplastic (409 aa).

The N-terminal 37 residues, 1 to 37, are a transit peptide targeting the chloroplast; the sequence is MAAFLQTNISLNAIKIVPGKYSSLTDHQFRAPYRIRC. At serine 74 the chain carries Phosphoserine. Position 118–133 (118–133) interacts with NAD(+); the sequence is IGGYKWDKNEKHLRPE. Substrate is bound by residues arginine 140, arginine 150, and arginine 178. Asparagine 238 serves as a coordination point for NAD(+). Aspartate 268 contacts substrate. Aspartate 268 contacts Mg(2+). Asparagine 269 is an NAD(+) binding site. Mg(2+) is bound by residues aspartate 292 and aspartate 296. Position 322–338 (322–338) interacts with NAD(+); sequence EPIHGSAPDIAGQDKAN.

It belongs to the isocitrate and isopropylmalate dehydrogenases family. Homodimer. It depends on Mg(2+) as a cofactor. Mn(2+) serves as cofactor. In terms of tissue distribution, highly expressed in seedlings, leaves, stems and roots and, to a lower extent, in flowers, pollen and siliques.

Its subcellular location is the plastid. The protein resides in the chloroplast stroma. The enzyme catalyses (2R,3S)-3-isopropylmalate + NAD(+) = 4-methyl-2-oxopentanoate + CO2 + NADH. It functions in the pathway amino-acid biosynthesis; L-leucine biosynthesis; L-leucine from 3-methyl-2-oxobutanoate: step 3/4. Its pathway is secondary metabolite biosynthesis. With respect to regulation, regulated by a thiol-based redox modification; oxidation by CuCl(2) leads to a decreased activity. Involved in both glucosinolate and leucine biosynthesis; catalyzes the oxidative decarboxylation step in both leucine biosynthesis (primary metabolism) and methionine chain elongation of glucosinolates (specialized metabolism). Catalyzes the oxidation of 3-carboxy-2-hydroxy-4-methylpentanoate (3-isopropylmalate, 3-IPM) to 3-carboxy-4-methyl-2-oxopentanoate. The product decarboxylates to 4-methyl-2 oxopentanoate. Required during pollen development and involved in embryo sac development. More active on 3-isopropylmalate and NAD(+) than towards D-malate. In Arabidopsis thaliana (Mouse-ear cress), this protein is 3-isopropylmalate dehydrogenase 1, chloroplastic.